The sequence spans 428 residues: Cyclic AMP-responsive element-binding protein 3-like protein 3-A (428 aa).

At 1–286 (MENYSDQGGD…VMNGSNKPVQ (286 aa)) the chain is on the cytoplasmic side. Residues 67–83 (VSGSPVWSPSPSDSGIS) show a composition bias toward low complexity. Residues 67–104 (VSGSPVWSPSPSDSGISEDPHSDHIDSPPPNASPPMEP) are disordered. Positions 93–103 (SPPPNASPPME) are enriched in pro residues. Residues 210-273 (ILKKIRRKIR…ISLMEQLRRL (64 aa)) form the bZIP domain. Residues 212–241 (KKIRRKIRNKQSAQESRKKKKEYIDGLESR) form a basic motif region. Residues 252–273 (LQRKVFQLEKCNISLMEQLRRL) form a leucine-zipper region. Residues 287–303 (AGTCVLVLLLSFTLILL) traverse the membrane as a helical; Signal-anchor for type II membrane protein segment. Topologically, residues 304 to 428 (PNLKPFTDTK…SRRSPHADDM (125 aa)) are lumenal. A disordered region spans residues 381–428 (TEYDPESHNHSFDQHDEHHHGDPITGHVATVTLNPRRGSRRSPHADDM). Positions 385-402 (PESHNHSFDQHDEHHHGD) are enriched in basic and acidic residues. Residue asparagine 389 is glycosylated (N-linked (GlcNAc...) asparagine).

It belongs to the bZIP family. ATF subfamily. In terms of assembly, binds DNA as a dimer. Controlled by regulated intramembrane proteolysis (RIP). A fragment containing the cytoplasmic transcription factor domain is released by proteolysis. The cleavage seems to be performed sequentially by site-1 and site-2 proteases.

It localises to the endoplasmic reticulum membrane. Its subcellular location is the nucleus. Its function is as follows. Transcriptional activator. Binds the cAMP response element (CRE). Activates transcription through box-B element and CRE. Seems to function synergistically with atf6. Regulates FGF21 transcription. This Danio rerio (Zebrafish) protein is Cyclic AMP-responsive element-binding protein 3-like protein 3-A (creb3l3a).